We begin with the raw amino-acid sequence, 198 residues long: Recombination protein RecR (198 aa).

The C4-type zinc finger occupies 57–72 (CEKCNTFTEAQICEVC). In terms of domain architecture, Toprim spans 80–175 (TLLCVVETPA…AVTRLARGVP (96 aa)).

Belongs to the RecR family.

May play a role in DNA repair. It seems to be involved in an RecBC-independent recombinational process of DNA repair. It may act with RecF and RecO. The sequence is that of Recombination protein RecR from Paraburkholderia phytofirmans (strain DSM 17436 / LMG 22146 / PsJN) (Burkholderia phytofirmans).